Here is a 363-residue protein sequence, read N- to C-terminus: Uroporphyrinogen decarboxylase (363 aa).

Substrate contacts are provided by residues 27–31 (RQAGR), Asp77, Tyr157, Thr212, and His333.

This sequence belongs to the uroporphyrinogen decarboxylase family. In terms of assembly, homodimer.

The protein resides in the cytoplasm. It catalyses the reaction uroporphyrinogen III + 4 H(+) = coproporphyrinogen III + 4 CO2. It participates in porphyrin-containing compound metabolism; protoporphyrin-IX biosynthesis; coproporphyrinogen-III from 5-aminolevulinate: step 4/4. Functionally, catalyzes the decarboxylation of four acetate groups of uroporphyrinogen-III to yield coproporphyrinogen-III. This is Uroporphyrinogen decarboxylase from Cupriavidus necator (strain ATCC 17699 / DSM 428 / KCTC 22496 / NCIMB 10442 / H16 / Stanier 337) (Ralstonia eutropha).